Consider the following 194-residue polypeptide: MDIVLGIRVEDCTLVATSKAATRGISVLKDTDDKTRQLNSHNLMAYSGEAGDTVQFAEYIQANTQLYTMRENDTELSPKATASFVRNQLATSIRSRKPYQVNVLLAGYDTNTGKPSLNWIDYLGTQVELPYAAHGYAGFYCTSLLDKHYKKGMNFEDGLDLLKKCIKELETRMPIDFKGCYIKVVDKEGIKLVE.

It belongs to the peptidase T1B family. As to quaternary structure, the 26S proteasome consists of a 20S proteasome core and two 19S regulatory subunits. The 20S proteasome core is composed of 28 subunits that are arranged in four stacked rings, resulting in a barrel-shaped structure. The two end rings are each formed by seven alpha subunits, and the two central rings are each formed by seven beta subunits. The catalytic chamber with the active sites is on the inside of the barrel.

The protein localises to the cytoplasm. It localises to the nucleus. Its function is as follows. Non-catalytic component of the proteasome, a multicatalytic proteinase complex which is characterized by its ability to cleave peptides with Arg, Phe, Tyr, Leu, and Glu adjacent to the leaving group at neutral or slightly basic pH. The proteasome has an ATP-dependent proteolytic activity. This Meyerozyma guilliermondii (strain ATCC 6260 / CBS 566 / DSM 6381 / JCM 1539 / NBRC 10279 / NRRL Y-324) (Yeast) protein is Probable proteasome subunit beta type-4 (PRO2).